An 835-amino-acid polypeptide reads, in one-letter code: Protein translocase subunit SecA (835 aa).

ATP contacts are provided by residues Gln85, 103–107 (GEGKT), and Asp492. Residues Cys819, Cys821, Cys830, and Cys831 each contribute to the Zn(2+) site.

It belongs to the SecA family. Monomer and homodimer. Part of the essential Sec protein translocation apparatus which comprises SecA, SecYEG and auxiliary proteins SecDF. Other proteins may also be involved. Requires Zn(2+) as cofactor.

It localises to the cell membrane. It is found in the cytoplasm. It catalyses the reaction ATP + H2O + cellular proteinSide 1 = ADP + phosphate + cellular proteinSide 2.. In terms of biological role, part of the Sec protein translocase complex. Interacts with the SecYEG preprotein conducting channel. Has a central role in coupling the hydrolysis of ATP to the transfer of proteins into and across the cell membrane, serving as an ATP-driven molecular motor driving the stepwise translocation of polypeptide chains across the membrane. This is Protein translocase subunit SecA from Clostridium botulinum (strain Loch Maree / Type A3).